A 386-amino-acid chain; its full sequence is Alanine racemase (386 aa).

The Proton acceptor; specific for D-alanine role is filled by lysine 38. At lysine 38 the chain carries N6-(pyridoxal phosphate)lysine. Residue arginine 136 participates in substrate binding. Tyrosine 267 functions as the Proton acceptor; specific for L-alanine in the catalytic mechanism. Methionine 315 lines the substrate pocket.

Belongs to the alanine racemase family. Pyridoxal 5'-phosphate serves as cofactor.

It carries out the reaction L-alanine = D-alanine. It participates in amino-acid biosynthesis; D-alanine biosynthesis; D-alanine from L-alanine: step 1/1. Its function is as follows. Catalyzes the interconversion of L-alanine and D-alanine. May also act on other amino acids. The protein is Alanine racemase (alr) of Clostridium perfringens (strain ATCC 13124 / DSM 756 / JCM 1290 / NCIMB 6125 / NCTC 8237 / Type A).